Reading from the N-terminus, the 1231-residue chain is S-layer protein A (1231 aa).

The signal sequence occupies residues 1–35 (MNKTLGLILTSVFLLSTLGIITGFVIPTQAANSND).

This sequence belongs to the Sulfolobales SlaA family. The mushroom-shaped unit cells of the Sulfolobales' S-layers may consist of three SlaB subunits and six SlaA subunits.

It is found in the secreted. The protein localises to the cell wall. It localises to the S-layer. Its function is as follows. S-layer large protein. May form the highly ordered outer sheath. This is S-layer protein A from Saccharolobus solfataricus (strain ATCC 35092 / DSM 1617 / JCM 11322 / P2) (Sulfolobus solfataricus).